The following is a 490-amino-acid chain: uncharacterized protein (490 aa).

The segment covering 370–385 has biased composition (low complexity); it reads FSMKRPSSSSSSLSGS. The tract at residues 370–406 is disordered; it reads FSMKRPSSSSSSLSGSWHGDTENSVKQSLASPSEASL. The segment covering 391–406 has biased composition (polar residues); that stretch reads ENSVKQSLASPSEASL.

It is found in the cytoplasm. The protein resides in the nucleus. This is an uncharacterized protein from Schizosaccharomyces pombe (strain 972 / ATCC 24843) (Fission yeast).